The primary structure comprises 213 residues: Octanoyltransferase (213 aa).

A BPL/LPL catalytic domain is found at 36–211 (TNTPDEIWLV…KFCQQLGFKL (176 aa)). Residues 75 to 82 (RGGQVTYH), 142 to 144 (SLG), and 155 to 157 (GLA) each bind substrate. Catalysis depends on Cys-173, which acts as the Acyl-thioester intermediate.

Belongs to the LipB family.

The protein resides in the cytoplasm. It catalyses the reaction octanoyl-[ACP] + L-lysyl-[protein] = N(6)-octanoyl-L-lysyl-[protein] + holo-[ACP] + H(+). The protein operates within protein modification; protein lipoylation via endogenous pathway; protein N(6)-(lipoyl)lysine from octanoyl-[acyl-carrier-protein]: step 1/2. Its function is as follows. Catalyzes the transfer of endogenously produced octanoic acid from octanoyl-acyl-carrier-protein onto the lipoyl domains of lipoate-dependent enzymes. Lipoyl-ACP can also act as a substrate although octanoyl-ACP is likely to be the physiological substrate. This Photorhabdus laumondii subsp. laumondii (strain DSM 15139 / CIP 105565 / TT01) (Photorhabdus luminescens subsp. laumondii) protein is Octanoyltransferase.